A 231-amino-acid chain; its full sequence is Enolase-phosphatase E1 (231 aa).

The protein belongs to the HAD-like hydrolase superfamily. MasA/MtnC family. In terms of assembly, monomer. Mg(2+) is required as a cofactor.

The enzyme catalyses 5-methylsulfanyl-2,3-dioxopentyl phosphate + H2O = 1,2-dihydroxy-5-(methylsulfanyl)pent-1-en-3-one + phosphate. It participates in amino-acid biosynthesis; L-methionine biosynthesis via salvage pathway; L-methionine from S-methyl-5-thio-alpha-D-ribose 1-phosphate: step 3/6. It functions in the pathway amino-acid biosynthesis; L-methionine biosynthesis via salvage pathway; L-methionine from S-methyl-5-thio-alpha-D-ribose 1-phosphate: step 4/6. Its function is as follows. Bifunctional enzyme that catalyzes the enolization of 2,3-diketo-5-methylthiopentyl-1-phosphate (DK-MTP-1-P) into the intermediate 2-hydroxy-3-keto-5-methylthiopentenyl-1-phosphate (HK-MTPenyl-1-P), which is then dephosphorylated to form the acireductone 1,2-dihydroxy-3-keto-5-methylthiopentene (DHK-MTPene). In Stenotrophomonas maltophilia (strain R551-3), this protein is Enolase-phosphatase E1.